Consider the following 43-residue polypeptide: Snake venom metalloproteinase crotalin (43 aa).

Residues 1-43 (LLRRKSHDHAQNHDGDKCLRGASLGYYQSFLNQYKPQCILNKP) form the Peptidase M12B domain. Histidine 13 contacts Zn(2+).

Belongs to the venom metalloproteinase (M12B) family. P-I subfamily. As to quaternary structure, monomer. Zn(2+) is required as a cofactor. Post-translationally, this protein autoproteolytically degrades to 10 kDa and 14 kDa fragments in the presence of SDS. Interestingly, the two fragments, as well as reduced crotalin are able to bind vWF, indicating that the binding activity does not require a specific protein conformation. Expressed by the venom gland.

It localises to the secreted. Functionally, snake venom zinc metalloproteinase that inhibits ristocin-induced platelet aggregation by abolishing the binding of von Willebrand factor (vWF) to platelet glycoprotein Ib alpha (GPIBA) through the cleavage of both GP1BA and vWF. Also has fibrinogenolytic activities by degrading the alpha- (FGA) and beta-chain (FGB) of fibrinogen. In vivo, induces a slight hemorrhage when applied to chick chorioallantoic membrane and has potent antithrombic effect. The polypeptide is Snake venom metalloproteinase crotalin (Crotalus atrox (Western diamondback rattlesnake)).